Reading from the N-terminus, the 501-residue chain is Dihydrolipoyl dehydrogenase, mitochondrial (501 aa).

The N-terminal 31 residues, 1–31 (MAMANLARRKGYSLLSSETLRYSFSLRSRAF), are a transit peptide targeting the mitochondrion. FAD-binding positions include 67–76 (EKRGALGGTC), Lys85, Gly149, and 178–180 (TGS). Cysteines 76 and 81 form a disulfide. NAD(+)-binding positions include 215 to 222 (GAGYIGLE), Glu238, Val272, and Gly307. Residues Asp348 and 354–357 (MLAH) contribute to the FAD site. His480 functions as the Proton acceptor in the catalytic mechanism.

The protein belongs to the class-I pyridine nucleotide-disulfide oxidoreductase family. As to quaternary structure, homodimer. FAD serves as cofactor.

Its subcellular location is the mitochondrion matrix. It catalyses the reaction N(6)-[(R)-dihydrolipoyl]-L-lysyl-[protein] + NAD(+) = N(6)-[(R)-lipoyl]-L-lysyl-[protein] + NADH + H(+). Lipoamide dehydrogenase is a component of the glycine cleavage system as well as of the alpha-ketoacid dehydrogenase complexes. The pyruvate dehydrogenase complex contains multiple copies of three enzymatic components: pyruvate dehydrogenase (E1), dihydrolipoamide acetyltransferase (E2) and lipoamide dehydrogenase (E3). In Pisum sativum (Garden pea), this protein is Dihydrolipoyl dehydrogenase, mitochondrial (LPD).